A 261-amino-acid chain; its full sequence is Phosphatidylglycerol--prolipoprotein diacylglyceryl transferase (261 aa).

Helical transmembrane passes span 17-37 (FAIH…LLLG), 59-79 (LLFA…TLFY), 94-114 (IWEG…ALLW), and 121-141 (TSFF…LAFG). Residue Arg142 coordinates a 1,2-diacyl-sn-glycero-3-phospho-(1'-sn-glycerol). A run of 2 helical transmembrane segments spans residues 174–194 (PSQI…LWIY) and 228–248 (FLGL…PMII).

It belongs to the Lgt family.

It is found in the cell inner membrane. The enzyme catalyses L-cysteinyl-[prolipoprotein] + a 1,2-diacyl-sn-glycero-3-phospho-(1'-sn-glycerol) = an S-1,2-diacyl-sn-glyceryl-L-cysteinyl-[prolipoprotein] + sn-glycerol 1-phosphate + H(+). It functions in the pathway protein modification; lipoprotein biosynthesis (diacylglyceryl transfer). In terms of biological role, catalyzes the transfer of the diacylglyceryl group from phosphatidylglycerol to the sulfhydryl group of the N-terminal cysteine of a prolipoprotein, the first step in the formation of mature lipoproteins. This is Phosphatidylglycerol--prolipoprotein diacylglyceryl transferase from Polynucleobacter asymbioticus (strain DSM 18221 / CIP 109841 / QLW-P1DMWA-1) (Polynucleobacter necessarius subsp. asymbioticus).